The sequence spans 281 residues: Bifunctional protein FolD (281 aa).

163–165 (GRS) contacts NADP(+).

This sequence belongs to the tetrahydrofolate dehydrogenase/cyclohydrolase family. As to quaternary structure, homodimer.

The catalysed reaction is (6R)-5,10-methylene-5,6,7,8-tetrahydrofolate + NADP(+) = (6R)-5,10-methenyltetrahydrofolate + NADPH. It carries out the reaction (6R)-5,10-methenyltetrahydrofolate + H2O = (6R)-10-formyltetrahydrofolate + H(+). The protein operates within one-carbon metabolism; tetrahydrofolate interconversion. In terms of biological role, catalyzes the oxidation of 5,10-methylenetetrahydrofolate to 5,10-methenyltetrahydrofolate and then the hydrolysis of 5,10-methenyltetrahydrofolate to 10-formyltetrahydrofolate. In Leuconostoc mesenteroides subsp. mesenteroides (strain ATCC 8293 / DSM 20343 / BCRC 11652 / CCM 1803 / JCM 6124 / NCDO 523 / NBRC 100496 / NCIMB 8023 / NCTC 12954 / NRRL B-1118 / 37Y), this protein is Bifunctional protein FolD.